The chain runs to 251 residues: Imidazole glycerol phosphate synthase subunit HisF (251 aa).

Residues Asp-11 and Asp-130 contribute to the active site.

Belongs to the HisA/HisF family. As to quaternary structure, heterodimer of HisH and HisF.

The protein resides in the cytoplasm. It catalyses the reaction 5-[(5-phospho-1-deoxy-D-ribulos-1-ylimino)methylamino]-1-(5-phospho-beta-D-ribosyl)imidazole-4-carboxamide + L-glutamine = D-erythro-1-(imidazol-4-yl)glycerol 3-phosphate + 5-amino-1-(5-phospho-beta-D-ribosyl)imidazole-4-carboxamide + L-glutamate + H(+). Its pathway is amino-acid biosynthesis; L-histidine biosynthesis; L-histidine from 5-phospho-alpha-D-ribose 1-diphosphate: step 5/9. Its function is as follows. IGPS catalyzes the conversion of PRFAR and glutamine to IGP, AICAR and glutamate. The HisF subunit catalyzes the cyclization activity that produces IGP and AICAR from PRFAR using the ammonia provided by the HisH subunit. The sequence is that of Imidazole glycerol phosphate synthase subunit HisF from Flavobacterium psychrophilum (strain ATCC 49511 / DSM 21280 / CIP 103535 / JIP02/86).